Here is a 133-residue protein sequence, read N- to C-terminus: ATP synthase epsilon chain (133 aa).

The protein belongs to the ATPase epsilon chain family. F-type ATPases have 2 components, CF(1) - the catalytic core - and CF(0) - the membrane proton channel. CF(1) has five subunits: alpha(3), beta(3), gamma(1), delta(1), epsilon(1). CF(0) has three main subunits: a, b and c.

It is found in the cell membrane. Functionally, produces ATP from ADP in the presence of a proton gradient across the membrane. This chain is ATP synthase epsilon chain, found in Clostridium botulinum (strain 657 / Type Ba4).